The chain runs to 166 residues: Protein FAM89A (166 aa).

The protein belongs to the FAM89 family.

This chain is Protein FAM89A (fam89a), found in Xenopus laevis (African clawed frog).